The primary structure comprises 328 residues: GMP reductase (328 aa).

The active-site Thioimidate intermediate is the C176. Residue 205 to 228 (IIADGGIRTHGDIAKSIRFGASMI) coordinates NADP(+).

Belongs to the IMPDH/GMPR family. GuaC type 2 subfamily.

The enzyme catalyses IMP + NH4(+) + NADP(+) = GMP + NADPH + 2 H(+). Its function is as follows. Catalyzes the irreversible NADPH-dependent deamination of GMP to IMP. It functions in the conversion of nucleobase, nucleoside and nucleotide derivatives of G to A nucleotides, and in maintaining the intracellular balance of A and G nucleotides. The protein is GMP reductase of Streptococcus pneumoniae (strain P1031).